Consider the following 251-residue polypeptide: Spermatogenesis-associated protein 46 (251 aa).

It is found in the nucleus membrane. In terms of biological role, plays a role in spermiogenesis and fertilization. This chain is Spermatogenesis-associated protein 46 (SPATA46), found in Macaca fascicularis (Crab-eating macaque).